We begin with the raw amino-acid sequence, 210 residues long: Peroxynitrite isomerase (210 aa).

The short motif at 21–27 is the GXWXGXG element; it reads GQWEGQG. Residue His190 participates in heme b binding.

It belongs to the nitrobindin family. Homodimer. Heme b serves as cofactor.

It catalyses the reaction peroxynitrite = nitrate. It participates in nitrogen metabolism. Its function is as follows. Heme-binding protein able to scavenge peroxynitrite and to protect free L-tyrosine against peroxynitrite-mediated nitration, by acting as a peroxynitrite isomerase that converts peroxynitrite to nitrate. Therefore, this protein likely plays a role in peroxynitrite sensing and in the detoxification of reactive nitrogen and oxygen species (RNS and ROS, respectively). Is able to bind nitric oxide (NO) in vitro, but may act as a sensor of peroxynitrite levels in vivo. The protein is Peroxynitrite isomerase of Renibacterium salmoninarum (strain ATCC 33209 / DSM 20767 / JCM 11484 / NBRC 15589 / NCIMB 2235).